Reading from the N-terminus, the 671-residue chain is Palmitoleoyl-protein carboxylesterase NOTUM (671 aa).

The first 46 residues, 1-46, serve as a signal peptide directing secretion; it reads MAVEQIDKMAAKAGEATNKWIKPQQPLLTLLLLLATFSQLPAVCSS. A glycan (N-linked (GlcNAc...) asparagine) is linked at Asn95. Catalysis depends on charge relay system residues Ser237 and Asp338. Asn372 carries N-linked (GlcNAc...) asparagine glycosylation. The active-site Charge relay system is the His384. The interval 411 to 592 is disordered; the sequence is HSTRSRRHDK…TKSKKRHRVP (182 aa). The segment covering 439–454 has biased composition (basic residues); sequence NQRHQRHRQRLQRQKH. Over residues 470–486 the composition is skewed to basic and acidic residues; the sequence is LSKEEREERKRLRQEQR. The segment covering 487-497 has biased composition (basic residues); that stretch reads QRRKQRRRQQQ. The span at 505-514 shows a compositional bias: basic and acidic residues; sequence QEHRNKKDNS. The span at 570-583 shows a compositional bias: polar residues; sequence PQKTRSSNNASAGT. N-linked (GlcNAc...) asparagine glycosylation is found at Asn578 and Asn612.

This sequence belongs to the pectinacetylesterase family. Notum subfamily.

Its subcellular location is the secreted. The protein resides in the cell surface. The catalysed reaction is [Wnt protein]-O-(9Z)-hexadecenoyl-L-serine + H2O = [Wnt protein]-L-serine + (9Z)-hexadecenoate + H(+). Its function is as follows. Carboxylesterase that acts as a key negative regulator of the Wnt signaling pathway by specifically mediating depalmitoleoylation of WNT proteins. Serine palmitoleoylation of WNT proteins is required for efficient binding to frizzled receptors. Also acts as a regulator of long-range activity of Hedgehog (hh), possibly by regulating the switch between low and high level hh pathway signaling. In Drosophila melanogaster (Fruit fly), this protein is Palmitoleoyl-protein carboxylesterase NOTUM.